Here is a 440-residue protein sequence, read N- to C-terminus: Indoleamine 2,3-dioxygenase qulI (440 aa).

Histidine 347 is a heme binding site.

Belongs to the indoleamine 2,3-dioxygenase family. In terms of assembly, monomer. The cofactor is heme.

The catalysed reaction is D-tryptophan + O2 = N-formyl-D-kynurenine. It catalyses the reaction L-tryptophan + O2 = N-formyl-L-kynurenine. The protein operates within secondary metabolite biosynthesis. Functionally, indoleamine 2,3-dioxygenase; part of the gene cluster that mediates the biosynthesis of quinolactacin A2 (QUL A2), a fungal alkaloid that features a quinolone-gamma-lactam hybrid, which is a potential pharmacophore for the treatment of cancer and Alzheimer's disease. The quinolone-gamma-lactam hybrid scaffold is synthesized from the combination of L-isoleucine (L-Ile) and the nonproteinogenic amino acid L-kynurenine, followed by quinolone cyclization, oxidative decarboxylation, and lactam formation. Additionally, the N-methyl group is derived from methionine, which might be catalyzed by an S-adenosylmethionine (SAM)-dependent methyltransferase. Bioconversion of L-tryptophan to L-kynurenine could be catalyzed by the indoleamine-2,3-dioxygenase (IDO) qulI to produce an unstable product, N-formyl-L-kynurenine, followed by kynurenine formamidase catalyzed hydrolysis. QulM then acts as a methyltransferase that methylates L-kynurenine at the N-4 position. The FMN-dependent alpha-hydroxy acid dehydrogenase qulF than functions as an oxidative decarboxylase which converts N-methylkynurenine into 2-aminobenzoylacetamide via 2 tandem reactions, including dehydrogenation and decarboxylation. An amidase located outside of the qul gene cluster further produces the unstable beta-keto acid precursor N-methyl-2-aminobenzoylacetate, which could be spontaneously dehydrated to form N-methyl-4-hydroxy-2-quinolone. The NRPS qulB is able to incorporate N-methyl-2-aminobenzoylacetate and efficiently compete with the spontaneous reaction. By further extending the beta-keto acid with L-Ile, qulA performs a Dieckmann condensation to form the gamma-lactam ring and release a 4-ketopyrrolidinone intermediate from the assembly line. This intermediate could plausibly further undergo a spontaneous cyclization to yield the final quinolone-gamma-lactam hybrid structure. The sequence is that of Indoleamine 2,3-dioxygenase qulI from Penicillium citrinum.